We begin with the raw amino-acid sequence, 148 residues long: MAHLLLLHGPNLNLLGTREPEIYGRITLPQIDAALAERATAAGHGLSSLQSNAEHVLIERIHATPEDGTAFILINPGAFTHTSVALRDALLAVALPFVEIHLSNPYTREPFRHHSYLADKALGVVCGFGVDSYRIALEGVIARLGSDV.

Tyrosine 23 serves as the catalytic Proton acceptor. Asparagine 75, histidine 81, and aspartate 88 together coordinate substrate. The Proton donor role is filled by histidine 101. Substrate-binding positions include 102–103 (LS) and arginine 112.

Belongs to the type-II 3-dehydroquinase family. Homododecamer.

It carries out the reaction 3-dehydroquinate = 3-dehydroshikimate + H2O. It participates in metabolic intermediate biosynthesis; chorismate biosynthesis; chorismate from D-erythrose 4-phosphate and phosphoenolpyruvate: step 3/7. Its function is as follows. Catalyzes a trans-dehydration via an enolate intermediate. The protein is 3-dehydroquinate dehydratase of Xylella fastidiosa (strain 9a5c).